We begin with the raw amino-acid sequence, 355 residues long: 3-dehydroquinate synthase (355 aa).

NAD(+) contacts are provided by residues 71 to 76 (EGEERK), 105 to 109 (GVVGD), 129 to 130 (TS), Lys142, and Lys151. 3 residues coordinate Zn(2+): Glu184, His246, and His263.

The protein belongs to the sugar phosphate cyclases superfamily. Dehydroquinate synthase family. The cofactor is Co(2+). Zn(2+) is required as a cofactor. It depends on NAD(+) as a cofactor.

The protein resides in the cytoplasm. The catalysed reaction is 7-phospho-2-dehydro-3-deoxy-D-arabino-heptonate = 3-dehydroquinate + phosphate. Its pathway is metabolic intermediate biosynthesis; chorismate biosynthesis; chorismate from D-erythrose 4-phosphate and phosphoenolpyruvate: step 2/7. Its function is as follows. Catalyzes the conversion of 3-deoxy-D-arabino-heptulosonate 7-phosphate (DAHP) to dehydroquinate (DHQ). The polypeptide is 3-dehydroquinate synthase (Streptococcus pneumoniae (strain 70585)).